Consider the following 260-residue polypeptide: 5'-nucleotidase SurE (260 aa).

Positions 10, 11, 41, and 95 each coordinate a divalent metal cation.

It belongs to the SurE nucleotidase family. A divalent metal cation serves as cofactor.

It localises to the cytoplasm. The catalysed reaction is a ribonucleoside 5'-phosphate + H2O = a ribonucleoside + phosphate. Its function is as follows. Nucleotidase that shows phosphatase activity on nucleoside 5'-monophosphates. In Methanoregula boonei (strain DSM 21154 / JCM 14090 / 6A8), this protein is 5'-nucleotidase SurE.